Reading from the N-terminus, the 123-residue chain is Large ribosomal subunit protein bL19 (123 aa).

This sequence belongs to the bacterial ribosomal protein bL19 family.

This protein is located at the 30S-50S ribosomal subunit interface and may play a role in the structure and function of the aminoacyl-tRNA binding site. The sequence is that of Large ribosomal subunit protein bL19 from Laribacter hongkongensis (strain HLHK9).